Consider the following 159-residue polypeptide: Phosphopantetheine adenylyltransferase (159 aa).

T10 is a binding site for substrate. Residues 10 to 11 and H18 contribute to the ATP site; that span reads TF. K42, M74, and R88 together coordinate substrate. ATP is bound by residues 89 to 91, E99, and 124 to 130; these read GLR and WSFISSS.

It belongs to the bacterial CoaD family. In terms of assembly, homohexamer. Mg(2+) is required as a cofactor.

It is found in the cytoplasm. The enzyme catalyses (R)-4'-phosphopantetheine + ATP + H(+) = 3'-dephospho-CoA + diphosphate. It participates in cofactor biosynthesis; coenzyme A biosynthesis; CoA from (R)-pantothenate: step 4/5. In terms of biological role, reversibly transfers an adenylyl group from ATP to 4'-phosphopantetheine, yielding dephospho-CoA (dPCoA) and pyrophosphate. This is Phosphopantetheine adenylyltransferase from Cronobacter sakazakii (strain ATCC BAA-894) (Enterobacter sakazakii).